A 308-amino-acid polypeptide reads, in one-letter code: Ornithine carbamoyltransferase (308 aa).

Carbamoyl phosphate is bound by residues 56–59 (STRT), Q83, R107, and 134–137 (HPCQ). Residues N165, D225, and 229–230 (SM) each bind L-ornithine. Residues 266–267 (CL) and R294 each bind carbamoyl phosphate.

This sequence belongs to the aspartate/ornithine carbamoyltransferase superfamily. OTCase family.

The protein resides in the cytoplasm. It carries out the reaction carbamoyl phosphate + L-ornithine = L-citrulline + phosphate + H(+). It participates in amino-acid biosynthesis; L-arginine biosynthesis; L-arginine from L-ornithine and carbamoyl phosphate: step 1/3. In terms of biological role, reversibly catalyzes the transfer of the carbamoyl group from carbamoyl phosphate (CP) to the N(epsilon) atom of ornithine (ORN) to produce L-citrulline. The polypeptide is Ornithine carbamoyltransferase (Cereibacter sphaeroides (strain ATCC 17029 / ATH 2.4.9) (Rhodobacter sphaeroides)).